The following is a 279-amino-acid chain: Urease accessory protein UreD (279 aa).

The protein belongs to the UreD family. As to quaternary structure, ureD, UreF and UreG form a complex that acts as a GTP-hydrolysis-dependent molecular chaperone, activating the urease apoprotein by helping to assemble the nickel containing metallocenter of UreC. The UreE protein probably delivers the nickel.

It localises to the cytoplasm. Functionally, required for maturation of urease via the functional incorporation of the urease nickel metallocenter. In Rhodopseudomonas palustris (strain ATCC BAA-98 / CGA009), this protein is Urease accessory protein UreD.